Consider the following 335-residue polypeptide: Dihydroorotate dehydrogenase (quinone) (335 aa).

Residues 59–63 (AGADK) and Thr83 each bind FMN. Lys63 is a binding site for substrate. 108–112 (NRNGF) contributes to the substrate binding site. FMN-binding residues include Asn136 and Asn169. Asn169 provides a ligand contact to substrate. The active-site Nucleophile is the Ser172. Asn174 is a binding site for substrate. Lys214 and Gly242 together coordinate FMN. 243–244 (NT) contributes to the substrate binding site. FMN is bound by residues Gly265, Gly294, and 315 to 316 (YS).

This sequence belongs to the dihydroorotate dehydrogenase family. Type 2 subfamily. As to quaternary structure, monomer. The cofactor is FMN.

It localises to the cell membrane. It catalyses the reaction (S)-dihydroorotate + a quinone = orotate + a quinol. Its pathway is pyrimidine metabolism; UMP biosynthesis via de novo pathway; orotate from (S)-dihydroorotate (quinone route): step 1/1. Catalyzes the conversion of dihydroorotate to orotate with quinone as electron acceptor. The sequence is that of Dihydroorotate dehydrogenase (quinone) from Glaesserella parasuis serovar 5 (strain SH0165) (Haemophilus parasuis).